Reading from the N-terminus, the 258-residue chain is Thiamine thiazole synthase (258 aa).

NAD(+) contacts are provided by residues A36, 55–56 (EK), G63, V127, and 154–156 (HVD). Fe cation contacts are provided by D156 and H171. M224 contributes to the NAD(+) binding site. Residue R234 coordinates glycine.

This sequence belongs to the THI4 family. In terms of assembly, homooctamer; tetramer of dimers. Fe(2+) serves as cofactor.

It carries out the reaction hydrogen sulfide + glycine + NAD(+) = ADP-5-ethyl-4-methylthiazole-2-carboxylate + nicotinamide + 3 H2O + H(+). The protein operates within cofactor biosynthesis; thiamine diphosphate biosynthesis. In terms of biological role, involved in the biosynthesis of the thiazole moiety of thiamine. Catalyzes the conversion of NAD and glycine to adenosine diphosphate 5-(2-hydroxyethyl)-4-methylthiazole-2-carboxylate (ADT), an adenylated thiazole intermediate, using free sulfide as a source of sulfur. In Methanococcoides burtonii (strain DSM 6242 / NBRC 107633 / OCM 468 / ACE-M), this protein is Thiamine thiazole synthase.